Reading from the N-terminus, the 596-residue chain is MTQPNDAAKPVQGAGRFDIWAPEAGTVTLLAGGERYEMGRRPGNGPADEGWWTAADAPTGADVDYGYLLDGDEIPLPDPRTRRQPEGVHALSRTFDPGAHRWQDAGWQGRELQGSVIYELHIGTFTPEGTLDAAAGKLDYLAGLGIDFIELLPVNAFNGTHNWGYDGVQWFAVHEGYGGPAAYQRFVDAAHAAGLGVIQDVVYNHLGPSGNYLPRYGPYLKHGEGNTWGDSVNLDGPGSDHVRQYILDNVAMWLRDYRVDGLRLDAVHALKDERAVHILEEFGALADALSSEGGRPLTLIAESDLNNPRLLYPRDVNGYGLAGQWSDDFHHAVHVNVSGETTGYYSDFDSLGALAKVLRDGFFHDGSYSSFRGRCHGRPINFSAVHPAALVVCSQNHDQIGNRATGDRLSQSLPYGSLALAAVLTLTGPFTPMLFMGEEYGATTPWQFFTSHPEPELGKATAEGRIREFERMGWDPAVVPDPQDPETFTRSKLDWAEASAGDHARLLELYRSLITLRRSTPELARLGFADTAVEFDDDARWLRYWRGGVQVVLNFADRPISLDRPGTALLLATDDAVRMDGVQVELPPLSAAVLRD.

263–268 (RLDAVH) provides a ligand contact to substrate. Asp-265 acts as the Nucleophile in catalysis. The Proton donor role is filled by Glu-302. Residues 327-331 (DDFHH) and 397-402 (HDQIGN) each bind substrate.

Belongs to the glycosyl hydrolase 13 family.

The protein localises to the cytoplasm. It carries out the reaction hydrolysis of (1-&gt;4)-alpha-D-glucosidic linkage in 4-alpha-D-[(1-&gt;4)-alpha-D-glucanosyl]n trehalose to yield trehalose and (1-&gt;4)-alpha-D-glucan.. Its pathway is glycan biosynthesis; trehalose biosynthesis. This is Malto-oligosyltrehalose trehalohydrolase (treZ) from Rhizobium sp. (strain M-11).